Reading from the N-terminus, the 406-residue chain is Putative nickel insertion protein (406 aa).

This sequence belongs to the LarC family.

This Thermomicrobium roseum (strain ATCC 27502 / DSM 5159 / P-2) protein is Putative nickel insertion protein.